The sequence spans 439 residues: Protein disulfide-isomerase A6 (439 aa).

The signal sequence occupies residues 1–19 (MARLGFGLVSCTFFLAASG). Thioredoxin domains are found at residues 20–133 (LYSS…ALRQ) and 151–287 (QGRG…EDVA). Catalysis depends on nucleophile residues Cys55 and Cys58. Cys55 and Cys58 are joined by a disulfide. 3 positions are modified to phosphoserine: Ser129, Ser156, and Ser158. Positions 141 to 160 (GRSGGYSSGKQGRGDSSSKK) are disordered. Residues Cys190 and Cys193 each act as nucleophile in the active site. An intrachain disulfide couples Cys190 to Cys193. A disordered region spans residues 400 to 425 (GSFPAITAREPWDGRDGELPVEDDID). Ser427 is modified (phosphoserine). A Prevents secretion from ER motif is present at residues 436–439 (KDEL).

The protein belongs to the protein disulfide isomerase family. Part of a large chaperone multiprotein complex comprising DNAJB11, HSP90B1, HSPA5, HYOU, PDIA2, PDIA4, PDIA6, PPIB, SDF2L1, UGGT1 and very small amounts of ERP29, but not, or at very low levels, CALR nor CANX. Interacts with MICA on the surface of tumor cells, leading to MICA disulfide bond reduction which is required for its release from tumor cells. Interacts with ITGB3 following platelet stimulation. Interacts with ERN1; the interaction is direct. Interacts with EIF2AK3. Expressed most abundantly in lung and kidney, followed by heart, liver and brain.

Its subcellular location is the endoplasmic reticulum lumen. It is found in the cell membrane. The protein localises to the melanosome. The catalysed reaction is Catalyzes the rearrangement of -S-S- bonds in proteins.. Its function is as follows. May function as a chaperone that inhibits aggregation of misfolded proteins. Negatively regulates the unfolded protein response (UPR) through binding to UPR sensors such as ERN1, which in turn inactivates ERN1 signaling. May also regulate the UPR via the EIF2AK3 UPR sensor. Plays a role in platelet aggregation and activation by agonists such as convulxin, collagen and thrombin. This Mesocricetus auratus (Golden hamster) protein is Protein disulfide-isomerase A6 (PDIA6).